Reading from the N-terminus, the 176-residue chain is Ribosome maturation factor RimM (176 aa).

One can recognise a PRC barrel domain in the interval Glu97–Phe176.

Belongs to the RimM family. As to quaternary structure, binds ribosomal protein uS19.

It localises to the cytoplasm. Its function is as follows. An accessory protein needed during the final step in the assembly of 30S ribosomal subunit, possibly for assembly of the head region. Essential for efficient processing of 16S rRNA. May be needed both before and after RbfA during the maturation of 16S rRNA. It has affinity for free ribosomal 30S subunits but not for 70S ribosomes. This Shewanella loihica (strain ATCC BAA-1088 / PV-4) protein is Ribosome maturation factor RimM.